An 895-amino-acid polypeptide reads, in one-letter code: Stonin-2 (895 aa).

Disordered stretches follow at residues 10 to 101 (THQS…AISN), 144 to 204 (ASES…METI), and 236 to 279 (NEVG…PKST). Over residues 64–73 (SHSEQDDSSE) the composition is skewed to basic and acidic residues. 2 stretches are compositionally biased toward polar residues: residues 145–169 (SESS…TDLQ) and 179–193 (GRAS…SSSL). Phosphoserine is present on residues serine 278, serine 284, and serine 299. Disordered regions lie at residues 291 to 326 (ISSL…SPIN) and 386 to 424 (QIDD…PRDG). Short sequence motifs (NPF) lie at residues 310–312 (NPF) and 326–328 (NPF). The segment covering 311–323 (PFLNESLQDIQPS) has biased composition (polar residues). Residues 424 to 557 (GWPMMLRIPE…DLPVQSMDLS (134 aa)) enclose the SHD domain. In terms of domain architecture, MHD spans 565 to 872 (EEEITVDIRD…AHYSYKVEIE (308 aa)). Serine 759 carries the phosphoserine modification.

The protein belongs to the Stoned B family. In terms of assembly, interacts with the second C2 domain of synaptotagmins SYT1 and SYT2. Interacts with EPS15, EPS15R and ITSN1. Interacts indirectly with the AP-2 adapter complex. Interacts with TOR1A and COPS4; the interaction controls STON2 protein stability. Post-translationally, phosphorylated in vitro by PKD. Neddylated and ubiquitinated; leading to its degradation and inhibited by TOR1A and COPS4.

It localises to the synapse. The protein resides in the synaptosome. It is found in the cytoplasm. Its subcellular location is the membrane. Adapter protein involved in endocytic machinery. Involved in the synaptic vesicle recycling. May facilitate clathrin-coated vesicle uncoating. This is Stonin-2 (Ston2) from Rattus norvegicus (Rat).